Reading from the N-terminus, the 94-residue chain is YcgL domain-containing protein VP0875 (94 aa).

Positions 1-84 constitute a YcgL domain; it reads MLCSIYKSSK…PPENLLEKYK (84 aa).

The protein is YcgL domain-containing protein VP0875 of Vibrio parahaemolyticus serotype O3:K6 (strain RIMD 2210633).